Consider the following 484-residue polypeptide: Aspartyl/glutamyl-tRNA(Asn/Gln) amidotransferase subunit B (484 aa).

The protein belongs to the GatB/GatE family. GatB subfamily. As to quaternary structure, heterotrimer of A, B and C subunits.

It carries out the reaction L-glutamyl-tRNA(Gln) + L-glutamine + ATP + H2O = L-glutaminyl-tRNA(Gln) + L-glutamate + ADP + phosphate + H(+). It catalyses the reaction L-aspartyl-tRNA(Asn) + L-glutamine + ATP + H2O = L-asparaginyl-tRNA(Asn) + L-glutamate + ADP + phosphate + 2 H(+). Functionally, allows the formation of correctly charged Asn-tRNA(Asn) or Gln-tRNA(Gln) through the transamidation of misacylated Asp-tRNA(Asn) or Glu-tRNA(Gln) in organisms which lack either or both of asparaginyl-tRNA or glutaminyl-tRNA synthetases. The reaction takes place in the presence of glutamine and ATP through an activated phospho-Asp-tRNA(Asn) or phospho-Glu-tRNA(Gln). In Bordetella bronchiseptica (strain ATCC BAA-588 / NCTC 13252 / RB50) (Alcaligenes bronchisepticus), this protein is Aspartyl/glutamyl-tRNA(Asn/Gln) amidotransferase subunit B.